The primary structure comprises 178 residues: MSGGKYVDSEGHLYTVPIREQGNIYKPNNKAMADEMNEKQVYDAHTKEIDLVNRDPKHLNDDVVKIDFEDVIAEPEGTHSFDGIWKASFTTFTVTKYWFYRLLSALFGIPMALIWGIYFAILSFLHIWAVVPCIKSFLIEIQCISRVYSIYVHTFCDPLFEAIGKIFSNVRINLQKEI.

An N-acetylserine modification is found at Ser2. At Ser2 the chain carries Phosphoserine. The interval 2 to 94 (SGGKYVDSEG…WKASFTTFTV (93 aa)) is required for homooligomerization. At 2–104 (SGGKYVDSEG…TKYWFYRLLS (103 aa)) the chain is on the cytoplasmic side. An N6-acetyllysine; alternate modification is found at Lys5. Lys5 is covalently cross-linked (Glycyl lysine isopeptide (Lys-Gly) (interchain with G-Cter in ubiquitin); alternate). Tyr6 is modified (phosphotyrosine). Position 9 is a phosphoserine (Ser9). Tyr14 carries the phosphotyrosine; by ABL1 modification. A Phosphotyrosine modification is found at Tyr25. Glycyl lysine isopeptide (Lys-Gly) (interchain with G-Cter in ubiquitin) cross-links involve residues Lys26, Lys30, Lys39, Lys47, and Lys57. The segment at 82–94 (DGIWKASFTTFTV) is interaction with CAVIN3. An intramembrane region (helical) is located at residues 105-125 (ALFGIPMALIWGIYFAILSFL). Residues 126–178 (HIWAVVPCIKSFLIEIQCISRVYSIYVHTFCDPLFEAIGKIFSNVRINLQKEI) are Cytoplasmic-facing. Residues 131-142 (VPCIKSFLIEIQ) form an interacts with SPRY1, SPRY2, SPRY3 and SPRY4 region. S-palmitoyl cysteine attachment occurs at residues Cys133, Cys143, and Cys156. The tract at residues 149-160 (SIYVHTFCDPLF) is interacts with SPRY1, SPRY2, and SPRY4. The tract at residues 167–178 (FSNVRINLQKEI) is interacts with SPRY1, SPRY2, SPRY3 and SPRY4.

Belongs to the caveolin family. In terms of assembly, homooligomer. Interacts with GLIPR2. Interacts with NOSTRIN. Interacts with SNAP25 and STX1A. Interacts (via the N-terminus) with DPP4; the interaction is direct. Interacts with CTNNB1, CDH1 and JUP. Interacts with PACSIN2; this interaction induces membrane tubulation. Interacts with SLC7A9. Interacts with BMX and BTK. Interacts with TGFBR1. Interacts with CAVIN3 (via leucine-zipper domain) in a cholesterol-sensitive manner. Interacts with CAVIN1. Interacts with EHD2 in a cholesterol-dependent manner. Forms a ternary complex with UBXN6 and VCP; mediates CAV1 targeting to lysosomes for degradation. Interacts with ABCG1; this interaction regulates ABCG1-mediated cholesterol efflux. Interacts with NEU3; this interaction enhances NEU3 sialidase activity within caveola. Interacts (via C-terminus) with SPRY1, SPRY2 (via C-terminus), SPRY3, and SPRY4. Interacts with IGFBP5; this interaction allows trafficking of IGFBP5 from the plasma membrane to the nucleus. In terms of processing, phosphorylated at Tyr-14 by ABL1 in response to oxidative stress. Post-translationally, ubiquitinated. Undergo monoubiquitination and multi- and/or polyubiquitination. Monoubiquitination of N-terminal lysines promotes integration in a ternary complex with UBXN6 and VCP which promotes oligomeric CAV1 targeting to lysosomes for degradation. Ubiquitinated by ZNRF1; leading to degradation and modulation of the TLR4-mediated immune response.

The protein resides in the golgi apparatus membrane. Its subcellular location is the cell membrane. The protein localises to the membrane. It localises to the caveola. It is found in the membrane raft. Its function is as follows. May act as a scaffolding protein within caveolar membranes. Forms a stable heterooligomeric complex with CAV2 that targets to lipid rafts and drives caveolae formation. Mediates the recruitment of CAVIN proteins (CAVIN1/2/3/4) to the caveolae. Interacts directly with G-protein alpha subunits and can functionally regulate their activity. Involved in the costimulatory signal essential for T-cell receptor (TCR)-mediated T-cell activation. Its binding to DPP4 induces T-cell proliferation and NF-kappa-B activation in a T-cell receptor/CD3-dependent manner. Recruits CTNNB1 to caveolar membranes and may regulate CTNNB1-mediated signaling through the Wnt pathway. Negatively regulates TGFB1-mediated activation of SMAD2/3 by mediating the internalization of TGFBR1 from membrane rafts leading to its subsequent degradation. Binds 20(S)-hydroxycholesterol (20(S)-OHC). This Equus caballus (Horse) protein is Caveolin-1 (CAV1).